We begin with the raw amino-acid sequence, 609 residues long: Phosphoenolpyruvate carboxykinase [GTP] (609 aa).

Residues Arg-81 and 220-222 (YGG) each bind substrate. Mn(2+) is bound by residues Lys-229 and His-249. Residue Ser-271 coordinates substrate. Residue 272–277 (ACGKTN) participates in GTP binding. Cys-273 is an active-site residue. Mn(2+) is bound at residue Asp-296. 387 to 389 (NSR) provides a ligand contact to substrate. GTP is bound by residues Arg-389, Arg-420, and 515–518 (FGEN).

It belongs to the phosphoenolpyruvate carboxykinase [GTP] family. As to quaternary structure, monomer. Mn(2+) is required as a cofactor.

The protein resides in the cytoplasm. The catalysed reaction is oxaloacetate + GTP = phosphoenolpyruvate + GDP + CO2. It functions in the pathway carbohydrate biosynthesis; gluconeogenesis. Catalyzes the conversion of oxaloacetate (OAA) to phosphoenolpyruvate (PEP), the rate-limiting step in the metabolic pathway that produces glucose from lactate and other precursors derived from the citric acid cycle. In Mycobacterium ulcerans (strain Agy99), this protein is Phosphoenolpyruvate carboxykinase [GTP].